The sequence spans 102 residues: Citrate lyase acyl carrier protein (102 aa).

Ser-14 carries the O-(phosphoribosyl dephospho-coenzyme A)serine modification.

This sequence belongs to the CitD family. Oligomer with a subunit composition of (alpha,beta,gamma)6.

Its subcellular location is the cytoplasm. Covalent carrier of the coenzyme of citrate lyase. This is Citrate lyase acyl carrier protein from Streptococcus equi subsp. zooepidemicus (strain H70).